The chain runs to 370 residues: DNA primase small subunit PriS (370 aa).

Catalysis depends on residues Asp-92, Asp-94, and Asp-272.

This sequence belongs to the eukaryotic-type primase small subunit family. As to quaternary structure, heterodimer of a small subunit (PriS) and a large subunit (PriL). Mg(2+) serves as cofactor. Mn(2+) is required as a cofactor.

Its function is as follows. Catalytic subunit of DNA primase, an RNA polymerase that catalyzes the synthesis of short RNA molecules used as primers for DNA polymerase during DNA replication. The small subunit contains the primase catalytic core and has DNA synthesis activity on its own. Binding to the large subunit stabilizes and modulates the activity, increasing the rate of DNA synthesis while decreasing the length of the DNA fragments, and conferring RNA synthesis capability. The DNA polymerase activity may enable DNA primase to also catalyze primer extension after primer synthesis. May also play a role in DNA repair. This Picrophilus torridus (strain ATCC 700027 / DSM 9790 / JCM 10055 / NBRC 100828 / KAW 2/3) protein is DNA primase small subunit PriS.